Reading from the N-terminus, the 449-residue chain is Putative glycosyltransferase 7 (449 aa).

The Cytoplasmic portion of the chain corresponds to 1 to 32 (MVSPETSSSHYQSSPMAKYAGTRTRPVVCISD). The chain crosses the membrane as a helical; Signal-anchor for type II membrane protein span at residues 33 to 53 (VVLFLGGAFMSLILVWSFFSF). The Lumenal segment spans residues 54–449 (SSISPNLTVK…VPFDYPDEPW (396 aa)). N59, N123, and N332 each carry an N-linked (GlcNAc...) asparagine glycan.

The protein belongs to the glycosyltransferase 34 family.

It localises to the golgi apparatus membrane. Probable glycosyltransferase that may be involved in the biosynthesis of xyloglucan. This chain is Putative glycosyltransferase 7 (GT7), found in Arabidopsis thaliana (Mouse-ear cress).